Reading from the N-terminus, the 272-residue chain is Undecaprenyl-diphosphatase (272 aa).

8 helical membrane passes run 2 to 22 (LELIKAIFLGIVEGITEWLPI), 50 to 70 (VIQLGAIMAVVVLYWNKLFPF), 83 to 103 (FSLWIKVLAATLPAALIGVPF), 110 to 130 (LFYNYITVAITLIVYGVLFII), 148 to 168 (LGYKAVLLIGAFQVLALIPGT), 195 to 215 (LAIPVMFGASLLKLVKFGFAF), 220 to 240 (LIILLTGMIVAFAVSIFAIKF), and 250 to 270 (FKAFGYYRIILGLIVVLYFLA).

Belongs to the UppP family.

It is found in the cell membrane. It catalyses the reaction di-trans,octa-cis-undecaprenyl diphosphate + H2O = di-trans,octa-cis-undecaprenyl phosphate + phosphate + H(+). Its function is as follows. Catalyzes the dephosphorylation of undecaprenyl diphosphate (UPP). Confers resistance to bacitracin. The chain is Undecaprenyl-diphosphatase from Acetivibrio thermocellus (strain ATCC 27405 / DSM 1237 / JCM 9322 / NBRC 103400 / NCIMB 10682 / NRRL B-4536 / VPI 7372) (Clostridium thermocellum).